Consider the following 165-residue polypeptide: Protein SprT (165 aa).

A SprT-like domain is found at 20 to 163 (EKLAQANLKL…RCVHCGEQLV (144 aa)). His78 is a binding site for Zn(2+). The active site involves Glu79. Residue His82 participates in Zn(2+) binding.

Belongs to the SprT family. Zn(2+) is required as a cofactor.

Its subcellular location is the cytoplasm. This is Protein SprT from Shigella boydii serotype 18 (strain CDC 3083-94 / BS512).